The primary structure comprises 689 residues: Solute carrier organic anion transporter family member 1B2 (689 aa).

Residues 1-26 (MDQTQHPSKAAQPLRSEKTRHCDGFR) are Cytoplasmic-facing. A helical transmembrane segment spans residues 27 to 46 (IFLAALSFSYICKALGGVIM). Over 47–65 (KSSITQIERRFDIPSSISG) the chain is Extracellular. Residues 66–86 (LIDGGFEIGNLLVIVFVSYFG) form a helical membrane-spanning segment. The Cytoplasmic portion of the chain corresponds to 87-92 (SKLHRP). The helical transmembrane segment at 93-117 (KLIGTGCFIMGIGSILTALPHFFMG) threads the bilayer. At 118–163 (YYRYATENDISSLHNSTLTCLVNQTTSLTGTSPEIMEKGCEKGSNS) the chain is on the extracellular side. Residues Asn132 and Asn140 are each glycosylated (N-linked (GlcNAc...) asparagine). The helical transmembrane segment at 164 to 192 (YTWIYVLMGNMLRGIGETPIVPLGVSYID) threads the bilayer. Topologically, residues 193–211 (DFAKEGNSSMYLGTLHTIA) are cytoplasmic. A helical membrane pass occupies residues 212–232 (MIGPILGFIMSSVFAKLYVDV). Residues 233-250 (GYVDLRSVRITPQDARWV) are Extracellular-facing. Residues 251 to 275 (GAWWLGFIVNGLLCIICSIPFFFLP) form a helical membrane-spanning segment. The Cytoplasmic portion of the chain corresponds to 276-326 (KIPKRSQKERKNSASLHVLKTDEDKNPVTNPTTQEKQAPANLTGFLWSLRS). A phosphoserine mark is found at Ser288 and Ser290. The helical transmembrane segment at 327 to 348 (ILTNEQYVIFLILTLLQISSFI) threads the bilayer. At 349–368 (GSFTYLFKFIEQQFGQTASQ) the chain is on the extracellular side. A helical transmembrane segment spans residues 369-392 (ANFLLGVITIPTMASGMFLGGYLI). Topologically, residues 393–396 (KRLK) are cytoplasmic. A helical membrane pass occupies residues 397–420 (LTLLGITKFVFFTTTMAYVFYLSY). The Extracellular portion of the chain corresponds to 421–533 (FLLICENKAF…DKCKTKYYFY (113 aa)). A Kazal-like domain is found at 448–505 (DVPLSYCNSDCICDKNQWEPVCGENGVTYISPCLAGCKSFRGDKKLMNIEFYDCSCVS). 3 disulfides stabilise this stretch: Cys454-Cys484, Cys460-Cys480, and Cys469-Cys503. A glycan (N-linked (GlcNAc...) asparagine) is linked at Asn513. A helical membrane pass occupies residues 534–556 (ITFQVIISFFTALGSTSLMLILI). Residues 557–565 (RSVQPELKS) lie on the Cytoplasmic side of the membrane. Residues 566-591 (LGMGFHSLVVRTLGGILAPVYYGALI) form a helical membrane-spanning segment. The Extracellular portion of the chain corresponds to 592–625 (DRTCMKWSVTSCGARGACRLYNSRLFGMIYVGLS). A helical membrane pass occupies residues 626 to 643 (IALKTPILLLYVALIYVM). Over 644-689 (KRKMKRNDNKILENGRKFTDEGNPEPVNNNGYSCVPSDEKNSETPL) the chain is Cytoplasmic. Residues 658–689 (GRKFTDEGNPEPVNNNGYSCVPSDEKNSETPL) are disordered. Thr662 carries the phosphothreonine modification. Ser680 is subject to Phosphoserine. Residues 680 to 689 (SDEKNSETPL) are compositionally biased toward basic and acidic residues.

Belongs to the organo anion transporter (TC 2.A.60) family. In terms of tissue distribution, liver specific.

It is found in the cell membrane. The enzyme catalyses estrone 3-sulfate(out) = estrone 3-sulfate(in). The catalysed reaction is taurocholate(out) = taurocholate(in). It carries out the reaction prostaglandin E2(out) = prostaglandin E2(in). It catalyses the reaction L-thyroxine(out) = L-thyroxine(in). Mediates the Na(+)-independent uptake of organic anions such as taurochlate, bromosulfophthalein and steroid conjugates (estrone 3-sulfate, 17-beta-glucuronosyl estradiol, dehydroepiandrosterone sulfate). Also transports prostaglandin E2 and L-thyroxine (T4). Shows a pH-sensitive substrate specificity which may be ascribed to the protonation state of the binding site and leads to a stimulation of substrate transport in an acidic microenvironment. Hydrogencarbonate/HCO3(-) acts as the probable counteranion that exchanges for organic anions. The protein is Solute carrier organic anion transporter family member 1B2 (Slco1b2) of Mus musculus (Mouse).